Consider the following 224-residue polypeptide: Processed variable antigen (224 aa).

Tandem repeats lie at residues 1-6 (ETGESK), 7-12 (ETGESK), 13-18 (ETGESK), 19-24 (ETGESK), 25-30 (ETGESK), 31-36 (ETGESK), 37-42 (ETGESK), 43-48 (ETGESK), 49-54 (ETGESK), 55-60 (ETGESK), 61-66 (ETGESK), 67-72 (ETGESK), 73-78 (ETGESK), 79-84 (ETGESK), 85-90 (ETGESK), 91-96 (ETGESK), and 97-102 (ETGESK). The segment at 1–102 (ETGESKETGE…GESKETGESK (102 aa)) is 17 X 6 AA tandem repeats of E-T-G-E-S-K. Basic and acidic residues predominate over residues 1-137 (ETGESKETGE…TEESKDREGN (137 aa)). Positions 1–224 (ETGESKETGE…KKADNKKKKK (224 aa)) are disordered. Residues 144–153 (ENSENSNVTS) show a composition bias toward low complexity. Composition is skewed to basic and acidic residues over residues 156–173 (EETKKLAEKEENEGEKLG) and 185–217 (EDPKKLTEQEENGTKESSEETKDDKPEENEKKA).

This is Processed variable antigen from Plasmodium falciparum.